Here is a 474-residue protein sequence, read N- to C-terminus: PRAME family member 17 (474 aa).

An LRR 1; degenerate repeat occupies 97–124 (RWKLQVLDLRDVDGNFWTIWSGARALSC). One copy of the LRR 2; degenerate repeat lies at 179–203 (HLCCNKVQNYSMPTSSFRNLLKRVY). The stretch at 204–230 (PDSIQELEIKRKCSLNKTGKFAPYLSQ) is one LRR 3; degenerate repeat. The LRR 4; degenerate repeat unit spans residues 231–265 (MSNLRKLFLAFGYDDELYVSGQQQFVPDLDCPFLC). LRR repeat units lie at residues 266 to 291 (LYYP…LRCL), 292 to 323 (KNPL…SQLK), 324 to 342 (ELHL…PLGA), 348 to 375 (AATL…ALSR), and 376 to 400 (CSQL…LLCH).

The protein belongs to the PRAME family.

The polypeptide is PRAME family member 17 (Homo sapiens (Human)).